The primary structure comprises 467 residues: NADH-quinone oxidoreductase subunit N 2 (467 aa).

13 helical membrane passes run 1–21 (MSIF…ALFV), 31–51 (VASW…FALG), 66–86 (LSQF…GIAA), 99–119 (FMLL…VELI), 153–173 (ILFG…IIAA), 195–215 (AVIG…LFPF), 231–253 (AAYV…AAFV), 258–280 (EVTT…AALV), 287–307 (LLGF…AAGS), 315–335 (AFYS…VCAI), 357–377 (LAMI…TAGF), 394–414 (WLVI…LSMV), and 434–454 (LIFG…PAPL).

The protein belongs to the complex I subunit 2 family. As to quaternary structure, NDH-1 is composed of 14 different subunits. Subunits NuoA, H, J, K, L, M, N constitute the membrane sector of the complex.

The protein resides in the cell inner membrane. The catalysed reaction is a quinone + NADH + 5 H(+)(in) = a quinol + NAD(+) + 4 H(+)(out). Functionally, NDH-1 shuttles electrons from NADH, via FMN and iron-sulfur (Fe-S) centers, to quinones in the respiratory chain. The immediate electron acceptor for the enzyme in this species is believed to be ubiquinone. Couples the redox reaction to proton translocation (for every two electrons transferred, four hydrogen ions are translocated across the cytoplasmic membrane), and thus conserves the redox energy in a proton gradient. The protein is NADH-quinone oxidoreductase subunit N 2 of Solidesulfovibrio magneticus (strain ATCC 700980 / DSM 13731 / RS-1) (Desulfovibrio magneticus).